The primary structure comprises 332 residues: L-lactate dehydrogenase A chain (332 aa).

Residues 29 to 57 (GMVGMASAISILLKDLCDELAMVDVMEDK) and arginine 99 contribute to the NAD(+) site. Substrate-binding residues include arginine 106, asparagine 138, and arginine 169. Residue asparagine 138 coordinates NAD(+). Histidine 193 (proton acceptor) is an active-site residue. Threonine 248 is a substrate binding site.

This sequence belongs to the LDH/MDH superfamily. LDH family. Homotetramer.

The protein resides in the cytoplasm. The enzyme catalyses (S)-lactate + NAD(+) = pyruvate + NADH + H(+). Its pathway is fermentation; pyruvate fermentation to lactate; (S)-lactate from pyruvate: step 1/1. Functionally, interconverts simultaneously and stereospecifically pyruvate and lactate with concomitant interconversion of NADH and NAD(+). The polypeptide is L-lactate dehydrogenase A chain (ldha) (Eleginops maclovinus (Patagonian blennie)).